The following is a 417-amino-acid chain: Gamma-glutamyl phosphate reductase (417 aa).

It belongs to the gamma-glutamyl phosphate reductase family.

The protein resides in the cytoplasm. It carries out the reaction L-glutamate 5-semialdehyde + phosphate + NADP(+) = L-glutamyl 5-phosphate + NADPH + H(+). The protein operates within amino-acid biosynthesis; L-proline biosynthesis; L-glutamate 5-semialdehyde from L-glutamate: step 2/2. Functionally, catalyzes the NADPH-dependent reduction of L-glutamate 5-phosphate into L-glutamate 5-semialdehyde and phosphate. The product spontaneously undergoes cyclization to form 1-pyrroline-5-carboxylate. The protein is Gamma-glutamyl phosphate reductase of Serratia proteamaculans (strain 568).